The chain runs to 51 residues: U-Asilidin(1)-Mar1a (51 aa).

An N-terminal signal peptide occupies residues 1–23 (MANYIEVFSVLAIIFATVLAALA). 3 disulfide bridges follow: C26/C40, C33/C44, and C39/C49.

It belongs to the asilidin-1 family. In terms of tissue distribution, expressed by the venom gland. Is the most highly expressed peptide and is around 3000 times higher expressed in the thoracic glands compared to its body tissues.

The protein resides in the secreted. Its function is as follows. Induces neurotoxic effect on honeybees, including slow movements, disorientation and paralysis. Since it provokes similar symptoms than omega-atracotoxin, it is probable that it acts in the same way by inhibiting voltage-gated calcium channels. The protein is U-Asilidin(1)-Mar1a of Machimus arthriticus (Breck robberfly).